We begin with the raw amino-acid sequence, 318 residues long: tRNA pseudouridine synthase B (318 aa).

The active-site Nucleophile is aspartate 47.

It belongs to the pseudouridine synthase TruB family. Type 1 subfamily.

The catalysed reaction is uridine(55) in tRNA = pseudouridine(55) in tRNA. Responsible for synthesis of pseudouridine from uracil-55 in the psi GC loop of transfer RNAs. The protein is tRNA pseudouridine synthase B of Shewanella putrefaciens (strain CN-32 / ATCC BAA-453).